Here is an 87-residue protein sequence, read N- to C-terminus: Ragulator complex protein LAMTOR4 homolog (87 aa).

Belongs to the LAMTOR4 family. As to quaternary structure, part of the Ragulator complex.

The protein localises to the lysosome. Functionally, regulator of the TOR pathway, a signaling cascade that promotes cell growth in response to growth factors, energy levels, and amino acids. As part of the Ragulator complex, may activate the TOR signaling cascade in response to amino acids. This chain is Ragulator complex protein LAMTOR4 homolog, found in Dictyostelium discoideum (Social amoeba).